Consider the following 1155-residue polypeptide: RhoGEF domain-containing protein gxcJ (1155 aa).

Disordered regions lie at residues 114–216 (ENNS…NFLK), 259–333 (LNKK…IPSN), 429–460 (LVSQ…DSLE), 484–508 (LNNE…TTTT), and 604–639 (SNSN…NNYQ). Low complexity-rich tracts occupy residues 115-153 (NNSI…TNNN), 161-211 (TITN…NNNN), and 260-303 (NKKS…NNNN). A coiled-coil region spans residues 192-257 (NNNNNNNNNN…KDIEKLNSAL (66 aa)). Residues 304-319 (YKPTITSSQTQPSLME) are compositionally biased toward polar residues. Positions 320–330 (NSKDIDKKEKI) are enriched in basic and acidic residues. Residues 441-457 (FLASASSSSTTTITTTD) are compositionally biased toward low complexity. Low complexity predominate over residues 604-637 (SNSNSSNNNNSNSNNITNSNSSSFSKKNSNNNNN). The 175-residue stretch at 700-874 (HRTNLIKEIL…EKIVGTINSQ (175 aa)) folds into the DH domain. Positions 1084 to 1155 (SHRLSIPSTS…LVKSLVNIKT (72 aa)) are disordered. 2 stretches are compositionally biased toward low complexity: residues 1093–1121 (SSPN…GSPN) and 1128–1137 (QQQQLQQQQQ).

Its function is as follows. GTPase-activating protein. In Dictyostelium discoideum (Social amoeba), this protein is RhoGEF domain-containing protein gxcJ (gxcJ).